Reading from the N-terminus, the 514-residue chain is Extracellular exo-inulinase (514 aa).

A signal peptide spans 1 to 18 (MRAFLALIFLTFVMNVES). Substrate-binding positions include 33–34 (ND) and Gln52. Asp34 acts as the Nucleophile in catalysis. An N-linked (GlcNAc...) asparagine glycan is attached at Asn56. Substrate is bound by residues Trp60 and Ser95. 2 N-linked (GlcNAc...) asparagine glycosylation sites follow: Asn104 and Asn110. 162–163 (RD) provides a ligand contact to substrate. N-linked (GlcNAc...) asparagine glycans are attached at residues Asn197 and Asn203. The substrate site is built by Glu214 and Trp300. Glu214 (proton donor/acceptor) is an active-site residue. Asn357, Asn371, Asn389, and Asn422 each carry an N-linked (GlcNAc...) asparagine glycan.

This sequence belongs to the glycosyl hydrolase 32 family.

It is found in the secreted. The catalysed reaction is Hydrolysis of terminal, non-reducing (2-&gt;1)- and (2-&gt;6)-linked beta-D-fructofuranose residues in fructans.. Exo-inulinase involved in utilization of the plant storage polymer inulin, consisting of fructooligosaccharides with a degree of polymerization (DP) value from 2 to 60. Splits off terminal fructose units successively from the non-reducing end of the inulin molecule. This chain is Extracellular exo-inulinase, found in Meyerozyma guilliermondii (strain ATCC 6260 / CBS 566 / DSM 6381 / JCM 1539 / NBRC 10279 / NRRL Y-324) (Yeast).